A 144-amino-acid polypeptide reads, in one-letter code: Large ribosomal subunit protein uL11 (144 aa).

This sequence belongs to the universal ribosomal protein uL11 family. As to quaternary structure, part of the ribosomal stalk of the 50S ribosomal subunit. Interacts with L10 and the large rRNA to form the base of the stalk. L10 forms an elongated spine to which L12 dimers bind in a sequential fashion forming a multimeric L10(L12)X complex. One or more lysine residues are methylated.

Forms part of the ribosomal stalk which helps the ribosome interact with GTP-bound translation factors. This Neisseria meningitidis serogroup C (strain 053442) protein is Large ribosomal subunit protein uL11.